Reading from the N-terminus, the 734-residue chain is 5-methyltetrahydropteroyltriglutamate--homocysteine methyltransferase (734 aa).

Residues 15-18 (REFK) and K104 contribute to the 5-methyltetrahydropteroyltri-L-glutamate site. Residues 409–411 (IGS) and E462 each bind L-homocysteine. Residues 409–411 (IGS) and E462 contribute to the L-methionine site. 5-methyltetrahydropteroyltri-L-glutamate-binding positions include 493 to 494 (RC) and W539. L-homocysteine is bound at residue D577. Residue D577 coordinates L-methionine. A 5-methyltetrahydropteroyltri-L-glutamate-binding site is contributed by E583. Zn(2+)-binding residues include H618, C620, and E642. H672 functions as the Proton donor in the catalytic mechanism. C704 lines the Zn(2+) pocket.

This sequence belongs to the vitamin-B12 independent methionine synthase family. It depends on Zn(2+) as a cofactor.

It carries out the reaction 5-methyltetrahydropteroyltri-L-glutamate + L-homocysteine = tetrahydropteroyltri-L-glutamate + L-methionine. It functions in the pathway amino-acid biosynthesis; L-methionine biosynthesis via de novo pathway; L-methionine from L-homocysteine (MetE route): step 1/1. Functionally, catalyzes the transfer of a methyl group from 5-methyltetrahydrofolate to homocysteine resulting in methionine formation. The sequence is that of 5-methyltetrahydropteroyltriglutamate--homocysteine methyltransferase from Thermotoga maritima (strain ATCC 43589 / DSM 3109 / JCM 10099 / NBRC 100826 / MSB8).